Reading from the N-terminus, the 192-residue chain is Phosphoheptose isomerase (192 aa).

The SIS domain maps to 37 to 192 (LADSFKAGGK…IQLIEKEMVK (156 aa)). Substrate is bound at residue 52 to 54 (NGG). Zn(2+) is bound by residues H61 and E65. Substrate is bound by residues E65, 93–94 (ND), 119–121 (STS), S124, and Q172. Zn(2+) is bound by residues Q172 and H180.

This sequence belongs to the SIS family. GmhA subfamily. As to quaternary structure, homotetramer. It depends on Zn(2+) as a cofactor.

Its subcellular location is the cytoplasm. The enzyme catalyses 2 D-sedoheptulose 7-phosphate = D-glycero-alpha-D-manno-heptose 7-phosphate + D-glycero-beta-D-manno-heptose 7-phosphate. It participates in carbohydrate biosynthesis; D-glycero-D-manno-heptose 7-phosphate biosynthesis; D-glycero-alpha-D-manno-heptose 7-phosphate and D-glycero-beta-D-manno-heptose 7-phosphate from sedoheptulose 7-phosphate: step 1/1. Functionally, catalyzes the isomerization of sedoheptulose 7-phosphate in D-glycero-D-manno-heptose 7-phosphate. This Escherichia coli O139:H28 (strain E24377A / ETEC) protein is Phosphoheptose isomerase.